A 634-amino-acid chain; its full sequence is Probable potassium transport system protein Kup (634 aa).

12 helical membrane-spanning segments follow: residues 21-41, 58-78, 110-130, 148-168, 180-200, 217-237, 258-278, 296-316, 348-368, 377-397, 408-428, and 432-452; these read IILSAIGVVFGDIGTSPLYTL, VLGILSLIFWAMMLVVTIKYV, IYIVGILGIFGTSLFFGDGII, PHMKAFVVPITLAVLILLFLC, FGPITFLWFIAIGVVGVYNII, FFLEHGWHSMFVLGAVVLAVT, WMYVVLPMLALNYLGQGALVL, GLYPMIALATAAAVIASQALI, IYVPTVNWTLLMLVILTVIGF, AYGVAVTGTMMITTVLMIIYA, LLMIAIVFIAVDGAFFYANII, and DGAWFPLLLGVVIFTFMRTWL.

Belongs to the HAK/KUP transporter (TC 2.A.72) family.

Its subcellular location is the cell inner membrane. It carries out the reaction K(+)(in) + H(+)(in) = K(+)(out) + H(+)(out). Functionally, transport of potassium into the cell. Likely operates as a K(+):H(+) symporter. This chain is Probable potassium transport system protein Kup, found in Xylella fastidiosa (strain Temecula1 / ATCC 700964).